Reading from the N-terminus, the 309-residue chain is Putative taste receptor type 2 member 33 (309 aa).

Position 1 (M1) is a topological domain, extracellular. Residues 2–22 (VYFLPIIFSILVVFAFVLGNF) traverse the membrane as a helical segment. At 23 to 46 (SNGFIALVNVIDWVKRQKISSADQ) the chain is on the cytoplasmic side. A helical membrane pass occupies residues 47-67 (ILTALVVSRVGLLWVILLHWY). Residues 68 to 86 (ANVFNSALYSLEVRIVASN) are Extracellular-facing. N-linked (GlcNAc...) asparagine glycosylation is present at N86. The chain crosses the membrane as a helical span at residues 87–107 (ISAVINHFSIWLAASLSIFYL). Residues 108–127 (LKIANFSNLIFLHLKKRIKS) lie on the Cytoplasmic side of the membrane. Residues 128–148 (VVLVILLGPLVFLICNLAVIT) form a helical membrane-spanning segment. Residues 149–181 (MDERVWTKEYEGNVTWKIKLRNAIHLSSLTVTT) are Extracellular-facing. Residue N161 is glycosylated (N-linked (GlcNAc...) asparagine). A helical transmembrane segment spans residues 182 to 202 (LANLIPFTLSLICFLLLICSL). Residues 203 to 229 (CKHLKKMQLHSKGSQDPSTKVHIKALQ) are Cytoplasmic-facing. A helical transmembrane segment spans residues 230-250 (TVISFLMLCAIYFLSIMISVW). Residues 251–259 (NLRSLENKP) lie on the Extracellular side of the membrane. Residues 260–280 (VFMFCKAIRFSYPSIHPFILI) traverse the membrane as a helical segment. Residues 281-309 (WGNKKLKQTFLSVFWQVRYWVKGEKPSSP) lie on the Cytoplasmic side of the membrane.

Belongs to the G-protein coupled receptor T2R family.

The protein localises to the membrane. Its function is as follows. Putative taste receptor which may play a role in the perception of bitterness. The sequence is that of Putative taste receptor type 2 member 33 from Homo sapiens (Human).